The primary structure comprises 118 residues: uncharacterized protein (118 aa).

This is an uncharacterized protein from Kitasatospora aureofaciens (Streptomyces aureofaciens).